The following is a 267-amino-acid chain: Matrilysin (267 aa).

A signal peptide spans 1–20 (MAAMRLTLFRIVCLLPGCLA). Positions 21–97 (LPLSQEAGEV…PRCGVPDVAE (77 aa)) are cleaved as a propeptide — activation peptide. Residues 88 to 95 (PRCGVPDV) carry the Cysteine switch motif. A Zn(2+)-binding site is contributed by Cys90. Asp156 is a binding site for Ca(2+). His166 and Asp168 together coordinate Zn(2+). Ca(2+)-binding residues include Asp173, Gly174, Gly176, and Thr178. A Zn(2+)-binding site is contributed by His181. 3 residues coordinate Ca(2+): Gly188, Gly190, and Asp192. Position 194 (His194) interacts with Zn(2+). Ca(2+) contacts are provided by Asp196 and Glu199. His217 provides a ligand contact to Zn(2+). Glu218 is an active-site residue. Positions 221 and 227 each coordinate Zn(2+).

The protein belongs to the peptidase M10A family. Ca(2+) serves as cofactor. It depends on Zn(2+) as a cofactor.

It is found in the secreted. It localises to the extracellular space. The protein resides in the extracellular matrix. The enzyme catalyses Cleavage of 14-Ala-|-Leu-15 and 16-Tyr-|-Leu-17 in B chain of insulin. No action on collagen types I, II, IV, V. Cleaves gelatin chain alpha2(I) &gt; alpha1(I).. Degrades casein, gelatins of types I, III, IV, and V, and fibronectin. Activates procollagenase. The polypeptide is Matrilysin (Mmp7) (Rattus norvegicus (Rat)).